The sequence spans 189 residues: MTSILRSPQALQLTLALIKPDAVAHPLILEAVHQQILSNKFLIVRTRELQWKLEDCRRFYREHEGRFFYQRLVEFMTSGPIRAYILAHKDAIQLWRTLMGPTRVFRARYIAPDSIRGSLGLTDTRNTTHGSDSVVSASREIAAFFPDFSEQRWYEEEEPQLRCGPVHYSPEEGIHCAAETGGHKQPNKT.

Residues Lys19, Phe68, Arg96, Thr102, Arg116, and Asn126 each contribute to the ATP site. His129 functions as the Pros-phosphohistidine intermediate in the catalytic mechanism.

This sequence belongs to the NDK family. Mg(2+) is required as a cofactor.

It carries out the reaction a 2'-deoxyribonucleoside 5'-diphosphate + ATP = a 2'-deoxyribonucleoside 5'-triphosphate + ADP. It catalyses the reaction a ribonucleoside 5'-diphosphate + ATP = a ribonucleoside 5'-triphosphate + ADP. In terms of biological role, major role in the synthesis of nucleoside triphosphates other than ATP. The ATP gamma phosphate is transferred to the NDP beta phosphate via a ping-pong mechanism, using a phosphorylated active-site intermediate. This is Nucleoside diphosphate kinase 6 (Nme6) from Mus musculus (Mouse).